We begin with the raw amino-acid sequence, 92 residues long: Small ribosomal subunit protein uS19c (92 aa).

The protein belongs to the universal ribosomal protein uS19 family.

The protein resides in the plastid. It is found in the chloroplast. Protein S19 forms a complex with S13 that binds strongly to the 16S ribosomal RNA. The sequence is that of Small ribosomal subunit protein uS19c from Huperzia lucidula (Shining clubmoss).